Here is a 624-residue protein sequence, read N- to C-terminus: Chaperone protein HtpG (624 aa).

The segment at methionine 1–arginine 336 is a; substrate-binding. Residues glutamate 337–lysine 552 form a b region. A c region spans residues leucine 553–serine 624.

The protein belongs to the heat shock protein 90 family. In terms of assembly, homodimer.

The protein localises to the cytoplasm. Functionally, molecular chaperone. Has ATPase activity. This chain is Chaperone protein HtpG, found in Shigella dysenteriae serotype 1 (strain Sd197).